A 246-amino-acid polypeptide reads, in one-letter code: Ribonuclease PH (246 aa).

Positions 1-33 (MTPPKLPVREGRDALTPRPVSVQRGVNPHAPGS) are disordered. Phosphate is bound by residues Arg90 and 128–130 (GTR).

It belongs to the RNase PH family. In terms of assembly, homohexameric ring arranged as a trimer of dimers.

It carries out the reaction tRNA(n+1) + phosphate = tRNA(n) + a ribonucleoside 5'-diphosphate. Phosphorolytic 3'-5' exoribonuclease that plays an important role in tRNA 3'-end maturation. Removes nucleotide residues following the 3'-CCA terminus of tRNAs; can also add nucleotides to the ends of RNA molecules by using nucleoside diphosphates as substrates, but this may not be physiologically important. Probably plays a role in initiation of 16S rRNA degradation (leading to ribosome degradation) during starvation. The chain is Ribonuclease PH from Deinococcus radiodurans (strain ATCC 13939 / DSM 20539 / JCM 16871 / CCUG 27074 / LMG 4051 / NBRC 15346 / NCIMB 9279 / VKM B-1422 / R1).